Here is a 188-residue protein sequence, read N- to C-terminus: Elongation factor P (188 aa).

Belongs to the elongation factor P family.

The protein localises to the cytoplasm. It participates in protein biosynthesis; polypeptide chain elongation. Involved in peptide bond synthesis. Stimulates efficient translation and peptide-bond synthesis on native or reconstituted 70S ribosomes in vitro. Probably functions indirectly by altering the affinity of the ribosome for aminoacyl-tRNA, thus increasing their reactivity as acceptors for peptidyl transferase. The protein is Elongation factor P of Methylorubrum populi (strain ATCC BAA-705 / NCIMB 13946 / BJ001) (Methylobacterium populi).